We begin with the raw amino-acid sequence, 538 residues long: Ubiquitin domain-containing protein DSK2a (538 aa).

A Ubiquitin-like domain is found at 18 to 93 (VAVNVRCSNG…VHMVRGFVPS (76 aa)). Residues 95-120 (PSAPAANAGNQTTAPQAVGSNDSSNL) are disordered. Polar residues predominate over residues 102 to 119 (AGNQTTAPQAVGSNDSSN). 2 consecutive STI1 domains span residues 138–179 (GNAM…QNLM) and 192–231 (NPQM…MREM). The interval 289-316 (QGVTTQGSDTSNNISAPNAETGTPNANP) is disordered. STI1 domains are found at residues 357–394 (SPLG…MNQL) and 398–433 (NPQL…MQQM). The region spanning 491-535 (PPEERFATQLQQLQEMGFYDRAENIRALLATNGNVNAAVERLLGS) is the UBA domain.

As to quaternary structure, interacts with 'Lys-48'-linked polyubiquitin chains via its UBA domain. Interacts with RPN10 and RPN13. Interacts with PEX2 and PEX12. In terms of tissue distribution, ubiquitous with a strong expression level in inflorescence.

Its subcellular location is the nucleus. The protein localises to the cytoplasm. Functionally, binds and presumably selects ubiquitin-conjugates for destruction. Prefers multiubiquitin chains rather than single ubiquitins, with a binding affinity for 'Lys-48'-linked ubiquitin chains. Acts as a ubiquitin receptor that associates with the 26S proteasomal docking subunit RPN10 for the indirect recognition of ubiquitinated substrates of ubiquitin/26S proteasome-mediated proteolysis (UPP). The polypeptide is Ubiquitin domain-containing protein DSK2a (DSK2A) (Arabidopsis thaliana (Mouse-ear cress)).